Here is a 1018-residue protein sequence, read N- to C-terminus: Unconventional myosin-Ig (1018 aa).

Met-1 carries the N-acetylmethionine modification. The region spanning 9-707 (YGKPDFVLLD…TLVTLEQSRA (699 aa)) is the Myosin motor domain. 102 to 109 (GESGAGKT) is an ATP binding site. The tract at residues 584–606 (MVALVENLASKEPFYVRCIKPNE) is actin-binding. One can recognise an IQ domain in the interval 710-739 (IPIIVLLLQKAWRGTLARWRCRRLRAIYTI). The 194-residue stretch at 824–1017 (GLRQDWGCRR…RGSFTLLWPS (194 aa)) folds into the TH1 domain.

Belongs to the TRAFAC class myosin-kinesin ATPase superfamily. Myosin family. As to quaternary structure, interacts with calmodulin; via its IQ motifs. As to expression, specifically expressed in hematopoietic cells.

Its subcellular location is the cell membrane. It is found in the cell projection. It localises to the phagocytic cup. In terms of biological role, unconventional myosin required during immune response for detection of rare antigen-presenting cells by regulating T-cell migration. Unconventional myosins are actin-based motor molecules with ATPase activity and serve in intracellular movements. Acts as a regulator of T-cell migration by generating membrane tension, enforcing cell-intrinsic meandering search, thereby enhancing detection of rare antigens during lymph-node surveillance, enabling pathogen eradication. Also required in B-cells, where it regulates different membrane/cytoskeleton-dependent processes. Involved in Fc-gamma receptor (Fc-gamma-R) phagocytosis. Functionally, constitutes the minor histocompatibility antigen HA-2. More generally, minor histocompatibility antigens (mHags) refer to immunogenic peptide which, when complexed with MHC, can generate an immune response after recognition by specific T-cells. The peptides are derived from polymorphic intracellular proteins, which are cleaved by normal pathways of antigen processing. The binding of these peptides to MHC class I or class II molecules and their expression on the cell surface can stimulate T-cell responses and thereby trigger graft rejection or graft-versus-host disease (GVHD) after hematopoietic stem cell transplantation from HLA-identical sibling donor. GVHD is a frequent complication after bone marrow transplantation (BMT), due to mismatch of minor histocompatibility antigen in HLA-matched sibling marrow transplants. HA-2 is restricted to MHC class I HLA-A*0201. The polypeptide is Unconventional myosin-Ig (MYO1G) (Homo sapiens (Human)).